Reading from the N-terminus, the 148-residue chain is Prefoldin subunit alpha (148 aa).

The protein belongs to the prefoldin subunit alpha family. As to quaternary structure, heterohexamer of two alpha and four beta subunits.

The protein localises to the cytoplasm. Functionally, molecular chaperone capable of stabilizing a range of proteins. Seems to fulfill an ATP-independent, HSP70-like function in archaeal de novo protein folding. The polypeptide is Prefoldin subunit alpha (pfdA) (Pyrococcus horikoshii (strain ATCC 700860 / DSM 12428 / JCM 9974 / NBRC 100139 / OT-3)).